A 179-amino-acid polypeptide reads, in one-letter code: Large ribosomal subunit protein uL5 (179 aa).

This sequence belongs to the universal ribosomal protein uL5 family. In terms of assembly, part of the 50S ribosomal subunit; part of the 5S rRNA/L5/L18/L25 subcomplex. Contacts the 5S rRNA and the P site tRNA. Forms a bridge to the 30S subunit in the 70S ribosome.

Functionally, this is one of the proteins that bind and probably mediate the attachment of the 5S RNA into the large ribosomal subunit, where it forms part of the central protuberance. In the 70S ribosome it contacts protein S13 of the 30S subunit (bridge B1b), connecting the 2 subunits; this bridge is implicated in subunit movement. Contacts the P site tRNA; the 5S rRNA and some of its associated proteins might help stabilize positioning of ribosome-bound tRNAs. The chain is Large ribosomal subunit protein uL5 from Nitrosomonas eutropha (strain DSM 101675 / C91 / Nm57).